A 438-amino-acid polypeptide reads, in one-letter code: 26S proteasome regulatory subunit 7 homolog (438 aa).

The span at 1-15 shows a compositional bias: basic and acidic residues; the sequence is MPPKEDWEKYQKPVD. The disordered stretch occupies residues 1–31; it reads MPPKEDWEKYQKPVDTEEENDKNPPPLDEGD. The residue at position 90 (Ser90) is a Phosphoserine. 220 to 227 contributes to the ATP binding site; that stretch reads GPPGTGKT.

Belongs to the AAA ATPase family.

The protein localises to the cytoplasm. The protein resides in the nucleus. In terms of biological role, the 26S proteasome is involved in the ATP-dependent degradation of ubiquitinated proteins. The regulatory (or ATPase) complex confers ATP dependency and substrate specificity to the 26S complex. The chain is 26S proteasome regulatory subunit 7 homolog (rpt1) from Schizosaccharomyces pombe (strain 972 / ATCC 24843) (Fission yeast).